Reading from the N-terminus, the 125-residue chain is RxLR effector protein Avh6 (125 aa).

An N-terminal signal peptide occupies residues 1 to 25 (MRLSSTTFVVLAAVLLASGTAVSKA). Positions 48 to 70 (RFLRSHHTEDGKAKLSNYDNEER) match the RxLR-dEER motif.

This sequence belongs to the RxLR effector family.

The protein localises to the secreted. It localises to the host cell. Functionally, effector that suppresses plant defense responses during the early stages of pathogen infection. Suppresses cell death induced by effectors and PAMPs in plant hosts. Triggers a hypersensitive response (HR) in the presence of Rps1d. Suppresses BAX-induced cell death and enhanced P.capsici infection in Nicotiana benthamiana. Also suppresses effector-triggered immunity induction by associating with Avr1b and Rps1b, suggesting a role in suppressing plant immunity. This is RxLR effector protein Avh6 from Phytophthora sojae (Soybean stem and root rot agent).